The chain runs to 776 residues: Probable E3 ubiquitin-protein ligase HECTD2 (776 aa).

Positions 1 to 46 (MSEAVRVPSPATPLVVAAAAPEERKGKESEREKLPPIVSAGAGATA) are disordered. Low complexity predominate over residues 7–20 (VPSPATPLVVAAAA). Residue S9 is modified to Phosphoserine. A compositionally biased stretch (basic and acidic residues) spans 21 to 34 (PEERKGKESEREKL). The region spanning 437-776 (KRADLKKKLK…ISNSEGFGLE (340 aa)) is the HECT domain. The active-site Glycyl thioester intermediate is C744.

It catalyses the reaction S-ubiquitinyl-[E2 ubiquitin-conjugating enzyme]-L-cysteine + [acceptor protein]-L-lysine = [E2 ubiquitin-conjugating enzyme]-L-cysteine + N(6)-ubiquitinyl-[acceptor protein]-L-lysine.. It functions in the pathway protein modification; protein ubiquitination. Functionally, E3 ubiquitin-protein ligase which accepts ubiquitin from an E2 ubiquitin-conjugating enzyme in the form of a thioester and then directly transfers the ubiquitin to targeted substrates. This chain is Probable E3 ubiquitin-protein ligase HECTD2 (HECTD2), found in Pongo abelii (Sumatran orangutan).